A 290-amino-acid polypeptide reads, in one-letter code: 4-hydroxybenzoate octaprenyltransferase (290 aa).

Helical transmembrane passes span 33 to 53 (LAAL…AVFV), 91 to 111 (LGVR…FVLV), 116 to 136 (WEAV…PFTK), 138 to 158 (FFAM…VIAF), 165 to 185 (VPAT…AYDT), 212 to 232 (VAAI…VLAP), 237 to 257 (WPLW…FTLI), and 269 to 289 (FSKS…GYLL).

The protein belongs to the UbiA prenyltransferase family. Mg(2+) is required as a cofactor.

The protein resides in the cell inner membrane. It carries out the reaction all-trans-octaprenyl diphosphate + 4-hydroxybenzoate = 4-hydroxy-3-(all-trans-octaprenyl)benzoate + diphosphate. The protein operates within cofactor biosynthesis; ubiquinone biosynthesis. In terms of biological role, catalyzes the prenylation of para-hydroxybenzoate (PHB) with an all-trans polyprenyl group. Mediates the second step in the final reaction sequence of ubiquinone-8 (UQ-8) biosynthesis, which is the condensation of the polyisoprenoid side chain with PHB, generating the first membrane-bound Q intermediate 3-octaprenyl-4-hydroxybenzoate. This is 4-hydroxybenzoate octaprenyltransferase from Acidovorax ebreus (strain TPSY) (Diaphorobacter sp. (strain TPSY)).